Here is a 572-residue protein sequence, read N- to C-terminus: Fatty acid amide hydrolase 1 (572 aa).

The signal sequence occupies residues 1–14 (MIFYLVLLVLGAIA). Residues 32-63 (IVAQRRRDDLSKNVEQARKAADKLDTQRRDWI) adopt a coiled-coil conformation. Residues Lys-139 and Ser-214 each act as charge relay system in the active site. Substrate-binding positions include Ser-214 and 235–238 (VGGS). Ser-238 (acyl-ester intermediate) is an active-site residue.

It belongs to the amidase family. Expressed in the pharynx, some pharyngeal neurons, the posterior intestine and anal depressor muscles.

It carries out the reaction N-(5Z,8Z,11Z,14Z-eicosatetraenoyl)-ethanolamine + H2O = ethanolamine + (5Z,8Z,11Z,14Z)-eicosatetraenoate. It catalyses the reaction (9Z)-octadecenamide + H2O = (9Z)-octadecenoate + NH4(+). The enzyme catalyses (5Z,8Z,11Z,14Z,17Z-eicosapentaenoyl) ethanolamine + H2O = (5Z,8Z,11Z,14Z,17Z)-eicosapentaenoate + ethanolamine. The catalysed reaction is N-(9Z-hexadecenoyl) ethanolamine + H2O = (9Z)-hexadecenoate + ethanolamine. It carries out the reaction N-(9Z-octadecenoyl) ethanolamine + H2O = ethanolamine + (9Z)-octadecenoate. It catalyses the reaction N-octadecanoyl ethanolamine + H2O = octadecanoate + ethanolamine. The enzyme catalyses N-docosanoyl-ethanolamine + H2O = docosanoate + ethanolamine. The catalysed reaction is N-(15Z-tetracosenoyl)-ethanolamine + H2O = (15Z)-tetracosenoate + ethanolamine. It carries out the reaction N-hexadecanoylethanolamine + H2O = ethanolamine + hexadecanoate. It catalyses the reaction N-(9Z,12Z-octadecadienoyl)-ethanolamine + H2O = ethanolamine + (9Z,12Z)-octadecadienoate. The enzyme catalyses (9Z)-octadecenoate + glycine = N-(9Z-octadecenoyl)glycine + H2O. The catalysed reaction is N-(5Z,8Z,11Z,14Z)-eicosatetraenoyl-glycine + H2O = (5Z,8Z,11Z,14Z)-eicosatetraenoate + glycine. It carries out the reaction N-(5Z,8Z,11Z,14Z-eicosatetraenoyl)-L-serine + H2O = (5Z,8Z,11Z,14Z)-eicosatetraenoate + L-serine. In terms of biological role, catalyzes the hydrolysis of endogenous amidated lipids like anandamide (AEA or N-(5Z,8Z,11Z,14Z-eicosatetraenoyl)-ethanolamine) and eicosapentaneoyl ethanolamide (EPEA or (5Z,8Z,11Z,14Z,17Z-eicosapentaenoyl) ethanolamine), as well as other fatty amides, to their corresponding fatty acids, thereby regulating the signaling functions of these molecules. EPEA promotes dauer formation and may constitute a signal of high nutrient availability. Breakdown of EPEA may promote lifespan extension when nutrient availability is high. Facilitates axon regeneration after injury by degradating inhibitory compounds such as AEA. FAAH cooperates with PM20D1 in the hydrolysis of amino acid-conjugated fatty acids such as N-fatty acyl glycine and N-fatty acyl-L-serine, thereby acting as a physiological regulator of specific subsets of intracellular, but not of extracellular, N-fatty acyl amino acids. The sequence is that of Fatty acid amide hydrolase 1 from Caenorhabditis elegans.